A 247-amino-acid chain; its full sequence is tRNA (guanine-N(1)-)-methyltransferase (247 aa).

S-adenosyl-L-methionine is bound by residues Gly-115 and 135–140 (IGDYVL).

This sequence belongs to the RNA methyltransferase TrmD family. As to quaternary structure, homodimer.

It is found in the cytoplasm. The enzyme catalyses guanosine(37) in tRNA + S-adenosyl-L-methionine = N(1)-methylguanosine(37) in tRNA + S-adenosyl-L-homocysteine + H(+). In terms of biological role, specifically methylates guanosine-37 in various tRNAs. The protein is tRNA (guanine-N(1)-)-methyltransferase of Alkaliphilus metalliredigens (strain QYMF).